The following is a 400-amino-acid chain: Probable peptidoglycan D,D-transpeptidase PenA (400 aa).

The segment at 1–21 (NIDGKGQEGLELSREDSLRGE) is disordered. Residue Ser-128 is the Acyl-ester intermediate of the active site.

It belongs to the transpeptidase family. FtsI subfamily.

The protein resides in the cell inner membrane. It carries out the reaction Preferential cleavage: (Ac)2-L-Lys-D-Ala-|-D-Ala. Also transpeptidation of peptidyl-alanyl moieties that are N-acyl substituents of D-alanine.. The protein operates within cell wall biogenesis; peptidoglycan biosynthesis. Its function is as follows. Catalyzes cross-linking of the peptidoglycan cell wall at the division septum. The sequence is that of Probable peptidoglycan D,D-transpeptidase PenA from Neisseria flavescens.